We begin with the raw amino-acid sequence, 292 residues long: Nucleotide-binding protein AZOSEA20610 (292 aa).

Residue glycine 8 to serine 15 coordinates ATP. Aspartate 57–serine 60 contributes to the GTP binding site.

The protein belongs to the RapZ-like family.

In terms of biological role, displays ATPase and GTPase activities. The protein is Nucleotide-binding protein AZOSEA20610 of Aromatoleum aromaticum (strain DSM 19018 / LMG 30748 / EbN1) (Azoarcus sp. (strain EbN1)).